Consider the following 85-residue polypeptide: Augerpeptide-s6a (85 aa).

The N-terminal stretch at 1 to 20 (MTLTMSTVVFFSLILLTLGL) is a signal peptide. Positions 21–43 (QPKDKDEGVMGRSRLGKRGLLMR) are excised as a propeptide. Disulfide bonds link Cys54-Cys65, Cys58-Cys70, and Cys64-Cys81.

In terms of tissue distribution, expressed by the venom duct.

The protein localises to the secreted. This Terebra subulata (Chocolate spotted auger) protein is Augerpeptide-s6a.